Consider the following 259-residue polypeptide: Phosphate import ATP-binding protein PstB 1 (259 aa).

One can recognise an ABC transporter domain in the interval 13 to 254 (IETKDVDLFY…PAEKETEDYI (242 aa)). An ATP-binding site is contributed by 45–52 (GPSGCGKS).

It belongs to the ABC transporter superfamily. Phosphate importer (TC 3.A.1.7) family. In terms of assembly, the complex is composed of two ATP-binding proteins (PstB), two transmembrane proteins (PstC and PstA) and a solute-binding protein (PstS).

The protein resides in the cell membrane. The enzyme catalyses phosphate(out) + ATP + H2O = ADP + 2 phosphate(in) + H(+). Functionally, part of the ABC transporter complex PstSACB involved in phosphate import. Responsible for energy coupling to the transport system. The polypeptide is Phosphate import ATP-binding protein PstB 1 (Listeria innocua serovar 6a (strain ATCC BAA-680 / CLIP 11262)).